A 375-amino-acid polypeptide reads, in one-letter code: D-apiose dehydrogenase (375 aa).

29-30 (FF) lines the NAD(+) pocket. 4 residues coordinate Mg(2+): Trp-38, Arg-39, Ile-41, and Ala-44. Residues Asp-51, Ser-93, 111 to 112 (QK), Asn-140, and 179 to 181 (QPY) contribute to the NAD(+) site. Residue Lys-112 participates in substrate binding. Substrate contacts are provided by Gln-179, Asp-192, His-196, and Tyr-246.

It belongs to the Gfo/Idh/MocA family.

It catalyses the reaction D-apiofuranose + NAD(+) = D-apionolactone + NADH + H(+). Its pathway is carbohydrate metabolism. In terms of biological role, involved in catabolism of D-apiose. Catalyzes oxidation of D-apiose to D-apionolactone. The protein is D-apiose dehydrogenase of Paraburkholderia graminis (strain ATCC 700544 / DSM 17151 / LMG 18924 / NCIMB 13744 / C4D1M).